A 25-amino-acid chain; its full sequence is GMNLVFVGAEVAPWSKTGGLGDVLA.

Position 16 (Lys-16) interacts with ADP-alpha-D-glucose.

This sequence belongs to the glycosyltransferase 1 family. Bacterial/plant glycogen synthase subfamily. As to expression, expressed in endosperm.

Its subcellular location is the plastid. It is found in the chloroplast. It localises to the amyloplast. It catalyses the reaction an NDP-alpha-D-glucose + [(1-&gt;4)-alpha-D-glucosyl](n) = [(1-&gt;4)-alpha-D-glucosyl](n+1) + a ribonucleoside 5'-diphosphate + H(+). It functions in the pathway glycan biosynthesis; starch biosynthesis. Functionally, required for the synthesis of amylose in endosperm. The protein is Granule-bound starch synthase 1, chloroplastic/amyloplastic of Fagopyrum esculentum (Common buckwheat).